We begin with the raw amino-acid sequence, 49 residues long: Large ribosomal subunit protein bL33B (49 aa).

This sequence belongs to the bacterial ribosomal protein bL33 family.

The sequence is that of Large ribosomal subunit protein bL33B from Levilactobacillus brevis (strain ATCC 367 / BCRC 12310 / CIP 105137 / JCM 1170 / LMG 11437 / NCIMB 947 / NCTC 947) (Lactobacillus brevis).